We begin with the raw amino-acid sequence, 513 residues long: Na(+)/H(+) antiporter NhaB (513 aa).

12 helical membrane-spanning segments follow: residues 23–43 (LALIIFLIVNPLIFLISPFVA), 52–72 (IFTLAMALKCYPLLPGGLLAI), 97–117 (LLLMFMVAGIYFMKQLLLFIF), 120–140 (LLLSIRSKMLLSLSFCVAAAF), 144–164 (FLDALTVVAVVISVAVGFYGI), 202–222 (LMMHAGVGTALGGVMTMVGEP), 238–258 (FFLRMSPVTVPVLICGLLTCL), 303–323 (AIIGVWLVTALALHLAEVGLI), 348–368 (TESLPFTALLTVFFSVVAVII), 391–411 (LFYIFNGLLSSISDNVFVGTI), 447–467 (ATPNGQAAFLFLLTSALAPLI), and 475–495 (VWMALPYTLVLTVAGLLCVEF).

The protein belongs to the NhaB Na(+)/H(+) (TC 2.A.34) antiporter family.

It is found in the cell inner membrane. It catalyses the reaction 2 Na(+)(in) + 3 H(+)(out) = 2 Na(+)(out) + 3 H(+)(in). In terms of biological role, na(+)/H(+) antiporter that extrudes sodium in exchange for external protons. In Escherichia coli O127:H6 (strain E2348/69 / EPEC), this protein is Na(+)/H(+) antiporter NhaB.